We begin with the raw amino-acid sequence, 450 residues long: Na(+)/H(+) antiporter NhaA 2 (450 aa).

12 consecutive transmembrane segments (helical) span residues 43–63 (VGGA…NSPW), 86–106 (LTLG…VVGL), 124–144 (ALPM…FVAV), 155–175 (GWAI…AVIS), 185–205 (FLLT…AVFY), 208–228 (EINL…ALCV), 234–254 (SWWL…ESGV), 258–278 (VAGV…AGGP), 299–319 (VAVP…VSGL), 326–346 (PITL…IFLT), 364–384 (WIDV…SLLI), and 398–418 (FVKV…AVLL).

Belongs to the NhaA Na(+)/H(+) (TC 2.A.33) antiporter family.

The protein localises to the cell membrane. It catalyses the reaction Na(+)(in) + 2 H(+)(out) = Na(+)(out) + 2 H(+)(in). In terms of biological role, na(+)/H(+) antiporter that extrudes sodium in exchange for external protons. This Mycobacterium sp. (strain JLS) protein is Na(+)/H(+) antiporter NhaA 2.